Reading from the N-terminus, the 598-residue chain is 2-succinyl-5-enolpyruvyl-6-hydroxy-3-cyclohexene-1-carboxylate synthase (598 aa).

It belongs to the TPP enzyme family. MenD subfamily. As to quaternary structure, homodimer. Requires Mg(2+) as cofactor. Mn(2+) serves as cofactor. It depends on thiamine diphosphate as a cofactor.

The enzyme catalyses isochorismate + 2-oxoglutarate + H(+) = 5-enolpyruvoyl-6-hydroxy-2-succinyl-cyclohex-3-ene-1-carboxylate + CO2. The protein operates within quinol/quinone metabolism; 1,4-dihydroxy-2-naphthoate biosynthesis; 1,4-dihydroxy-2-naphthoate from chorismate: step 2/7. It participates in cofactor biosynthesis; phylloquinone biosynthesis. Its function is as follows. Catalyzes the thiamine diphosphate-dependent decarboxylation of 2-oxoglutarate and the subsequent addition of the resulting succinic semialdehyde-thiamine pyrophosphate anion to isochorismate to yield 2-succinyl-5-enolpyruvyl-6-hydroxy-3-cyclohexene-1-carboxylate (SEPHCHC). This chain is 2-succinyl-5-enolpyruvyl-6-hydroxy-3-cyclohexene-1-carboxylate synthase, found in Prochlorococcus marinus (strain NATL2A).